The primary structure comprises 291 residues: Pca regulon regulatory protein (291 aa).

The interval 1-22 is disordered; the sequence is MSDETLVNDPVNPEPARPASAA. The HTH iclR-type domain maps to 45 to 105; that stretch reads MTSLARGLAV…SDGRTYSLLP (61 aa). A DNA-binding region (H-T-H motif) is located at residues 67–86; it reads IAQISHRTEIPRAAVRRCLH. One can recognise an IclR-ED domain in the interval 120-291; it reads LAISAQPYLD…SRDLCHQLFG (172 aa).

Its function is as follows. Positive regulator of all genes within the pca regulon, pcaBDC, pcaIJ and pcaF. Also required for the chemotactic response to aromatic compounds. This Pseudomonas putida (Arthrobacter siderocapsulatus) protein is Pca regulon regulatory protein (pcaR).